The following is a 569-amino-acid chain: Cationic amino acid transporter 9, chloroplastic (569 aa).

The N-terminal 41 residues, M1 to R41, are a transit peptide targeting the chloroplast. 14 consecutive transmembrane segments (helical) span residues G53–V73, A81–L101, V113–V135, Y155–G175, L181–V201, V215–I235, A250–N270, I284–L304, I333–V353, H406–L428, W444–F464, F467–V487, F502–F522, and E528–G548.

Belongs to the amino acid-polyamine-organocation (APC) superfamily. Cationic amino acid transporter (CAT) (TC 2.A.3.3) family. In terms of tissue distribution, expressed in roots, stems, flowers, and leaves.

The protein resides in the plastid. It is found in the chloroplast membrane. Permease involved in the transport of the cationic amino acids. The polypeptide is Cationic amino acid transporter 9, chloroplastic (CAT9) (Arabidopsis thaliana (Mouse-ear cress)).